The sequence spans 258 residues: Acyl-[acyl-carrier-protein]--UDP-N-acetylglucosamine O-acyltransferase (258 aa).

The protein belongs to the transferase hexapeptide repeat family. LpxA subfamily. Homotrimer.

The protein localises to the cytoplasm. The enzyme catalyses a (3R)-hydroxyacyl-[ACP] + UDP-N-acetyl-alpha-D-glucosamine = a UDP-3-O-[(3R)-3-hydroxyacyl]-N-acetyl-alpha-D-glucosamine + holo-[ACP]. Its pathway is glycolipid biosynthesis; lipid IV(A) biosynthesis; lipid IV(A) from (3R)-3-hydroxytetradecanoyl-[acyl-carrier-protein] and UDP-N-acetyl-alpha-D-glucosamine: step 1/6. Its function is as follows. Involved in the biosynthesis of lipid A, a phosphorylated glycolipid that anchors the lipopolysaccharide to the outer membrane of the cell. The chain is Acyl-[acyl-carrier-protein]--UDP-N-acetylglucosamine O-acyltransferase from Pseudomonas putida (strain GB-1).